Here is a 509-residue protein sequence, read N- to C-terminus: Maturase K (509 aa).

This sequence belongs to the intron maturase 2 family. MatK subfamily.

The protein localises to the plastid. The protein resides in the chloroplast. Usually encoded in the trnK tRNA gene intron. Probably assists in splicing its own and other chloroplast group II introns. The polypeptide is Maturase K (Pereskia aculeata (Barbados gooseberry)).